Reading from the N-terminus, the 266-residue chain is Glutamate racemase (266 aa).

Residues 9–10 (DS) and 41–42 (YG) contribute to the substrate site. The Proton donor/acceptor role is filled by C72. A substrate-binding site is contributed by 73-74 (NT). The active-site Proton donor/acceptor is C184. Substrate is bound at residue 185–186 (TH).

It belongs to the aspartate/glutamate racemases family.

The catalysed reaction is L-glutamate = D-glutamate. It functions in the pathway cell wall biogenesis; peptidoglycan biosynthesis. Its function is as follows. Provides the (R)-glutamate required for cell wall biosynthesis. The protein is Glutamate racemase of Staphylococcus haemolyticus.